The sequence spans 129 residues: Protein yippee-like At5g53940 (129 aa).

Positions 12 to 109 (RSYRCRFCRT…LERGRIVDEI (98 aa)) constitute a Yippee domain. Residues C16, C19, C72, and C75 each coordinate Zn(2+).

Belongs to the yippee family.

The chain is Protein yippee-like At5g53940 from Arabidopsis thaliana (Mouse-ear cress).